The sequence spans 185 residues: Ribosome-recycling factor (185 aa).

The protein belongs to the RRF family.

It localises to the cytoplasm. Its function is as follows. Responsible for the release of ribosomes from messenger RNA at the termination of protein biosynthesis. May increase the efficiency of translation by recycling ribosomes from one round of translation to another. In Wolbachia pipientis subsp. Culex pipiens (strain wPip), this protein is Ribosome-recycling factor.